Here is a 117-residue protein sequence, read N- to C-terminus: Photosystem II reaction center Psb28 protein (117 aa).

Belongs to the Psb28 family. In terms of assembly, part of the photosystem II complex.

The protein resides in the cellular thylakoid membrane. This Prochlorococcus marinus (strain AS9601) protein is Photosystem II reaction center Psb28 protein.